The primary structure comprises 381 residues: D-rhamnosyltransferase WbpZ (381 aa).

Substrate is bound by residues Glu19, His116, Lys206, and Val252.

The protein belongs to the glycosyltransferase group 1 family. Glycosyltransferase 4 subfamily.

It is found in the cytoplasm. It catalyses the reaction GDP-alpha-D-rhamnose + N-acetyl-alpha-D-glucosaminyl-di-trans,octa-cis-undecaprenyl diphosphate = alpha-D-rhamnosyl-(1-&gt;3)-N-acetyl-alpha-D-glucosaminyl-1-diphospho-di-trans,octa-cis-undecaprenol + GDP + H(+). It carries out the reaction GDP-alpha-D-rhamnose + N-acetyl-alpha-D-galactosaminyl-di-trans,octa-cis-undecaprenyl diphosphate = alpha-D-rhamnosyl-(1-&gt;3)-N-acetyl-alpha-D-galactosaminyl-1-diphospho-di-trans,octa-cis-undecaprenol + GDP + H(+). The catalysed reaction is N-acetyl-alpha-D-glucosaminyl-di-trans,octa-cis-undecaprenyl diphosphate + GDP-alpha-D-mannose = alpha-D-mannosyl-(1-&gt;3)-N-acetyl-alpha-D-glucosaminyl-di-trans,octa-cis-undecaprenyl diphosphate + GDP + H(+). The enzyme catalyses N-acetyl-alpha-D-galactosaminyl-di-trans,octa-cis-undecaprenyl diphosphate + GDP-alpha-D-mannose = alpha-D-mannosyl-(1-&gt;3)-N-acetyl-alpha-D-galctosaminyl-1-diphospho-di-trans,octa-cis-undecaprenol + GDP + H(+). It functions in the pathway lipopolysaccharide biosynthesis; LPS oligosaccharide biosynthesis. Its activity is regulated as follows. Not activated by dithiothreitol (DTT) using GlcNAc-alpha-PO(3)-PO(3)-phenylundecyl (GlcNAc-PP-PhU) as acceptor substrate. 0.25% Triton X-100 and 0.125% NP-40 increases the activity 2.5-fold and 2-fold, respectively. 0.125% octyl glucoside has little effect on activity. Slightly increased activity with Mg(2+) and Pb(2+), while no effect with Mn(2+), Co(2+), Ni(2+), Cu(2+), Zn(2+), Ca(2+) or EDTA. Not inhibited by N-butyryl-galactosamine-alpha-benzyl or N-butyryl-glucosamine-beta-benzyl. Bis-imidazolium salts having aliphatic spacer groups with 4 or 6 carbons have little effect on activity, but spacer groups of 18-22 aliphatic carbons inhibit activity, with the most potent inhibitor being bis-imidazolium salt having a 20-carbon chain spacer length. In terms of biological role, non-processive alpha-1,3-D-rhamnosyltransferase. Catalyzes the transfer of one D-rhamnose (D-Rha) residue from donor substrate GDP-D-Rha in alpha-1-3 linkage to both GlcNAc- and GalNAc-diphosphate-lipid acceptor substrates. Is also able to transfer D-mannose (D-Man) to these acceptors at a lower level. Nucleotide sugars GDP-D-Rha, GDP-Fuc, UDP-Gal, UDP-GalNAc, UDP-GlcNAc and CMP-sialic acid cannot act as donor substrates. Only compounds with a diphosphate as the aglycone group can act as acceptor substrates. No activity is detected with compounds containing a diphosphate mimic. Fluorescent undecyl-anthracenyl group-containing compounds, such as GlcNAc-PO(3)-PO(3)-AnthrU and GalNAc-PO(3)-PO(3)-AnthrU, are also good acceptor substrates. Involved in the biosynthesis of the common polysaccharide antigen (CPA), also called A band, which is one of the two major cell surface O-antigens of the P.aeruginosa lipopolysaccharide. Involved in susceptibility to antibiotic colistin. The polypeptide is D-rhamnosyltransferase WbpZ (Pseudomonas aeruginosa (strain ATCC 15692 / DSM 22644 / CIP 104116 / JCM 14847 / LMG 12228 / 1C / PRS 101 / PAO1)).